Consider the following 218-residue polypeptide: Glutathione S-transferase class-mu 26 kDa isozyme (218 aa).

A GST N-terminal domain is found at M1–G83. Glutathione-binding positions include Y7–W8, W41–K45, N54–L55, and Q67–S68. The region spanning C85–L203 is the GST C-terminal domain. Residue Y111 participates in substrate binding.

Belongs to the GST superfamily. Mu family. Homodimer. As to expression, tegument and in subtegumentary parenchymal cells. GST 26 may be actively excreted by adult worms.

The catalysed reaction is RX + glutathione = an S-substituted glutathione + a halide anion + H(+). Conjugation of reduced glutathione to a wide number of exogenous and endogenous hydrophobic electrophiles. Its function is as follows. GST isoenzymes appear to play a central role in the parasite detoxification system. Other functions are also suspected including a role in increasing the solubility of haematin in the parasite gut. This chain is Glutathione S-transferase class-mu 26 kDa isozyme, found in Schistosoma mansoni (Blood fluke).